The following is a 313-amino-acid chain: Olfactory receptor 8B3 (313 aa).

Topologically, residues 1–25 (MLARNNSLVTEFILAGLTDHPEFQQ) are extracellular. N-linked (GlcNAc...) asparagine glycosylation is present at asparagine 5. A helical transmembrane segment spans residues 26-46 (PLFFLFLVVYIVTMVGNLGLI). The Cytoplasmic portion of the chain corresponds to 47–54 (ILFGLNSH). The helical transmembrane segment at 55-75 (LHTPMYYFLFNLSFIDLCYSS) threads the bilayer. The Extracellular segment spans residues 76 to 99 (VFTPKMLMNFVSKKNIISYVGCMT). Cysteine 97 and cysteine 189 are joined by a disulfide. A helical transmembrane segment spans residues 100–120 (QLFFFLFFVISECYMLTSMAY). At 121–139 (DRYVAICNPLLYKVTMSHQ) the chain is on the cytoplasmic side. A helical transmembrane segment spans residues 140 to 160 (VCSMLTFAAYIMGLAGATAHT). Residues 161–197 (GCMLRLTFCSANIINHYLCDILPLLQLSCTSTYVNEV) lie on the Extracellular side of the membrane. A helical membrane pass occupies residues 198-217 (VVLIVVGINIMVPSCTILIS). The Cytoplasmic portion of the chain corresponds to 218–237 (YVFIVTSILHIKSTQGRSKA). A helical membrane pass occupies residues 238 to 258 (FSTCSSHVIALSLFFGSAAFM). Topologically, residues 259–270 (YIKYSSGSMEQG) are extracellular. Residues 271–291 (KVSSVFYTNVVPMLNPLIYSL) traverse the membrane as a helical segment. Residues 292-313 (RNKDVKVALRKALIKIQRRNIF) lie on the Cytoplasmic side of the membrane.

The protein belongs to the G-protein coupled receptor 1 family.

It is found in the cell membrane. In terms of biological role, odorant receptor. This is Olfactory receptor 8B3 (OR8B3) from Homo sapiens (Human).